Reading from the N-terminus, the 317-residue chain is Ubiquinone biosynthesis protein COQ9, mitochondrial (317 aa).

Residues 1 to 46 (MAASVARVLKAAGGRQLLLMVARRRPVLRQPFLLMPRKFWGTSALR) constitute a mitochondrion transit peptide. The segment at 45-97 (LRSEDQKQPPFSSTSAHAGTPEHAEEQYQQQQPPPRYTDQAGEESEGYESEEQ) is disordered. Residues 85–96 (AGEESEGYESEE) show a composition bias toward acidic residues. Arginine 243 lines the a 1,2-diacylglycero-3-phosphoethanolamine pocket.

This sequence belongs to the COQ9 family. Homodimer. Heterodimer; two heterodimers of COQ7:COQ9 come together on the same side of the lipid pseudo-bilayer and form a curved tetramer with a hydrophobic surface suitable for membrane interaction. These two tetramers assemble into a soluble octamer with a pseudo-bilayer of lipids captured within. Interacts with COQ7; this interaction allows ubiquinone (CoQ) isoprene intermediates presentation to COQ7 and facilitates the COQ7-mediated hydroxylase step.

The protein localises to the mitochondrion. It participates in cofactor biosynthesis; ubiquinone biosynthesis. Its function is as follows. Membrane-associated protein that warps the membrane surface to access and bind aromatic isoprenes with high specificity, including ubiquinone (CoQ) isoprene intermediates and presents them directly to COQ7, therefore facilitating the COQ7-mediated hydroxylase step. Participates in the biosynthesis of coenzyme Q, also named ubiquinone, an essential lipid-soluble electron transporter for aerobic cellular respiration. The protein is Ubiquinone biosynthesis protein COQ9, mitochondrial of Xenopus tropicalis (Western clawed frog).